A 342-amino-acid polypeptide reads, in one-letter code: WW domain binding protein 1-like (342 aa).

A helical transmembrane segment spans residues 42 to 62 (LWWFWLVWTIIIILSCCCVCH). 2 disordered regions span residues 133–247 (LPPQ…RRFT) and 292–320 (PGDE…RPPA). The span at 158–173 (SSPLSEPSRSSTRPPS) shows a compositional bias: low complexity. Serine 173 carries the post-translational modification Phosphoserine. Over residues 212–240 (LDKDAECREELLKDDSSEHGAPDSKEKTP) the composition is skewed to basic and acidic residues.

It localises to the membrane. This Homo sapiens (Human) protein is WW domain binding protein 1-like (WBP1L).